Here is a 76-residue protein sequence, read N- to C-terminus: ATP synthase subunit 9, mitochondrial (76 aa).

Transmembrane regions (helical) follow at residues 14 to 34 (IATL…VALI) and 52 to 72 (ILGF…SFLL).

The protein belongs to the ATPase C chain family. F-type ATPases have 2 components, CF(1) - the catalytic core - and CF(0) - the membrane proton channel. CF(1) has five subunits: alpha(3), beta(3), gamma(1), delta(1), epsilon(1). CF(0) has three main subunits: a, b and c.

The protein localises to the mitochondrion membrane. Functionally, mitochondrial membrane ATP synthase (F(1)F(0) ATP synthase or Complex V) produces ATP from ADP in the presence of a proton gradient across the membrane which is generated by electron transport complexes of the respiratory chain. F-type ATPases consist of two structural domains, F(1) - containing the extramembraneous catalytic core and F(0) - containing the membrane proton channel, linked together by a central stalk and a peripheral stalk. During catalysis, ATP synthesis in the catalytic domain of F(1) is coupled via a rotary mechanism of the central stalk subunits to proton translocation. Part of the complex F(0) domain. A homomeric c-ring of probably 10 subunits is part of the complex rotary element. The protein is ATP synthase subunit 9, mitochondrial (ATP9) of Candida albicans (strain SC5314 / ATCC MYA-2876) (Yeast).